The sequence spans 2134 residues: Tudor domain-containing protein 6 (2134 aa).

Positions 287–315 are disordered; sequence RAPVGTDDEDSGSATWEEREESPDKPGSP. Position 292 is a phosphothreonine (threonine 292). Tudor domains lie at 309-368, 542-599, 820-879, and 1038-1092; these read PDKP…YFRM, RPEP…FRQL, YEGD…FFQV, and TLAP…AHDV. The segment at 1271 to 1296 is disordered; the sequence is SPMSGTKLDSALPERRMGEPSGRDLP. A compositionally biased stretch (basic and acidic residues) spans 1282–1296; it reads LPERRMGEPSGRDLP. 2 consecutive Tudor domains span residues 1358 to 1417 and 1570 to 1630; these read QWQS…DAVL and CPQI…LLLV. 2 disordered regions span residues 1699-1733 and 1860-1885; these read KKYA…GLKK and LQHS…LSPG. The segment covering 1711–1722 has biased composition (basic and acidic residues); the sequence is LSSEKRGPERKG. Serine 1723 and serine 1726 each carry phosphoserine. Position 1925 is a phosphoserine (serine 1925). Positions 1930–1939 are enriched in polar residues; that stretch reads AVSQDIQGSR. The segment at 1930 to 1985 is disordered; sequence AVSQDIQGSRCSEDERKAGYMGSSDDDHSRSPLLQHGKGGNSPAHDGRNLSEEEFP. Residues serine 1980, serine 2063, and serine 2115 each carry the phosphoserine modification.

In terms of assembly, found in a mRNP complex (i.e. messenger ribonucleoproteins which correspond to mRNA with bound proteins), at least composed of TDRD1, TDRD6, TDRD7 and DDX4. Found in a complex, at least composed of PIWIL1, PIWIL2, DDX4 and TDRD6. Interacts with Tex19.1 and probably Tex19.2. Interacts with PRMT5. Interacts with SNRPB (when methylated); to trigger spliceosome formation. In terms of processing, undergoes proteolytic cleavage near the C-terminal by an unknown protease during the transition from meiosis I to meiosis II in primary spermatocytes. Testis specific. Expressed in primary spermatocytes at post natal (PN) day 17.5. Expressed in midpachytene stage of primary spermatocytes at PN16 and in round spermatids at PN22 (at protein level).

The protein resides in the cytoplasm. Its function is as follows. Tudor domain-containing protein involved in germ cell development, more specifically the formation of chromatoid body (during spermiogenesis), Balbiani body (during oogenesis), germ plasm (upon fertilization), and for proper miRNA expression and spliceosome maturation. Essential for RNA-dependent helicase UPF1 localization to chromatoid body, for UPF1-UPF2 and UPF1-DDX4 interactions which are required for mRNA degradation, using the extended 3' UTR-triggered nonsense-mediated mRNA decay (NMD) pathway. Involved in spliceosome maturation and mRNA splicing in prophase I spermatocytes through interaction with arginine N-methyltransferase PRMT5 and symmetrically arginine dimethylated SNRPB (small nuclear ribonucleoprotein-associated protein). The protein is Tudor domain-containing protein 6 of Mus musculus (Mouse).